Consider the following 627-residue polypeptide: Carene synthase, chloroplastic (627 aa).

Residues 1–36 constitute a chloroplast transit peptide; it reads MSVISILPLASKSCLYKSLMSSTHELKALCRPIATL. Aspartate 378, aspartate 382, and aspartate 530 together coordinate Mg(2+). Residues 378 to 382 carry the DDXXD motif motif; it reads DDMYD.

This sequence belongs to the terpene synthase family. Tpsd subfamily. Mg(2+) is required as a cofactor. The cofactor is Mn(2+).

The protein resides in the plastid. It localises to the chloroplast. It catalyses the reaction (2E)-geranyl diphosphate = (+)-car-3-ene + diphosphate. The protein operates within terpene metabolism; oleoresin biosynthesis. Terpene synthase (TPS) involved in defensive oleoresin formation in conifers in response to insect attack or other injury. This is Carene synthase, chloroplastic (JF67) from Picea abies (Norway spruce).